The sequence spans 221 residues: Tetraspanin-2 (221 aa).

Residues 1 to 13 (MGRFRGGLRCIKY) are Cytoplasmic-facing. The chain crosses the membrane as a helical span at residues 14 to 34 (LLLGFNLLFWLAGSAVIAFGL). At 35–54 (WFRFGGAIKELSSEDKSPEY) the chain is on the extracellular side. Residues 55–75 (FYVGLYVLVGAGALMMAVGFF) form a helical membrane-spanning segment. Residues 76 to 90 (GCCGAMRESQCVLGS) are Cytoplasmic-facing. A helical membrane pass occupies residues 91–111 (FFTCLLVIFAAEVTTGVFAFI). Topologically, residues 112-188 (GKGVAIRHVQ…ETIISVKLQL (77 aa)) are extracellular. Residue N139 is glycosylated (N-linked (GlcNAc...) asparagine). A helical transmembrane segment spans residues 189 to 209 (IGIVGIGIAGLTIFGMIFSMV). Residues 210-221 (LCCAIRNSRDVI) lie on the Cytoplasmic side of the membrane.

The protein belongs to the tetraspanin (TM4SF) family.

It is found in the membrane. Its function is as follows. May play a role in signalling in oligodendrocytes in the early stages of their terminal differentiation into myelin-forming glia and may also function in stabilizing the mature sheath. The sequence is that of Tetraspanin-2 (TSPAN2) from Homo sapiens (Human).